The primary structure comprises 432 residues: Tol-Pal system protein TolB (432 aa).

The N-terminal stretch at 1 to 24 (MKLVTRMWSILIVFFLAVLQPAQA) is a signal peptide.

Belongs to the TolB family. In terms of assembly, the Tol-Pal system is composed of five core proteins: the inner membrane proteins TolA, TolQ and TolR, the periplasmic protein TolB and the outer membrane protein Pal. They form a network linking the inner and outer membranes and the peptidoglycan layer.

The protein localises to the periplasm. In terms of biological role, part of the Tol-Pal system, which plays a role in outer membrane invagination during cell division and is important for maintaining outer membrane integrity. This chain is Tol-Pal system protein TolB, found in Pasteurella multocida (strain Pm70).